A 165-amino-acid polypeptide reads, in one-letter code: uncharacterized protein (165 aa).

Residues 1–165 (MDIKVVKGSI…EAWEKVLGLR (165 aa)) enclose the Macro domain.

This is an uncharacterized protein from Aquifex aeolicus (strain VF5).